Consider the following 340-residue polypeptide: Ketol-acid reductoisomerase (NADP(+)) (340 aa).

One can recognise a KARI N-terminal Rossmann domain in the interval 1-183 (MAITVYYDKD…GGGRTGIIET (183 aa)). NADP(+) contacts are provided by residues 26–29 (FGSQ), R49, S52, S54, and 84–87 (DEIQ). The active site involves H109. G135 lines the NADP(+) pocket. The region spanning 184-329 (TFKAETETDL…RNLRAMMPWI (146 aa)) is the KARI C-terminal knotted domain. Positions 192, 196, 228, and 232 each coordinate Mg(2+). A substrate-binding site is contributed by S253.

The protein belongs to the ketol-acid reductoisomerase family. Mg(2+) is required as a cofactor.

The enzyme catalyses (2R)-2,3-dihydroxy-3-methylbutanoate + NADP(+) = (2S)-2-acetolactate + NADPH + H(+). It carries out the reaction (2R,3R)-2,3-dihydroxy-3-methylpentanoate + NADP(+) = (S)-2-ethyl-2-hydroxy-3-oxobutanoate + NADPH + H(+). It participates in amino-acid biosynthesis; L-isoleucine biosynthesis; L-isoleucine from 2-oxobutanoate: step 2/4. It functions in the pathway amino-acid biosynthesis; L-valine biosynthesis; L-valine from pyruvate: step 2/4. Functionally, involved in the biosynthesis of branched-chain amino acids (BCAA). Catalyzes an alkyl-migration followed by a ketol-acid reduction of (S)-2-acetolactate (S2AL) to yield (R)-2,3-dihydroxy-isovalerate. In the isomerase reaction, S2AL is rearranged via a Mg-dependent methyl migration to produce 3-hydroxy-3-methyl-2-ketobutyrate (HMKB). In the reductase reaction, this 2-ketoacid undergoes a metal-dependent reduction by NADPH to yield (R)-2,3-dihydroxy-isovalerate. The chain is Ketol-acid reductoisomerase (NADP(+)) from Campylobacter jejuni subsp. doylei (strain ATCC BAA-1458 / RM4099 / 269.97).